Consider the following 460-residue polypeptide: Tol-Pal system protein TolB (460 aa).

An N-terminal signal peptide occupies residues 1 to 22 (MTIFQKSFILLIIWNFSLFAFS).

The protein belongs to the TolB family. In terms of assembly, the Tol-Pal system is composed of five core proteins: the inner membrane proteins TolA, TolQ and TolR, the periplasmic protein TolB and the outer membrane protein Pal. They form a network linking the inner and outer membranes and the peptidoglycan layer.

The protein resides in the periplasm. In terms of biological role, part of the Tol-Pal system, which plays a role in outer membrane invagination during cell division and is important for maintaining outer membrane integrity. TolB occupies a key intermediary position in the Tol-Pal system because it communicates directly with both membrane-embedded components, Pal in the outer membrane and TolA in the inner membrane. This chain is Tol-Pal system protein TolB, found in Blochmanniella floridana.